Here is a 102-residue protein sequence, read N- to C-terminus: DET1- and DDB1-associated protein 1 (102 aa).

An N-acetylalanine modification is found at Ala-2. Residue Ser-33 is modified to Phosphoserine. Composition is skewed to basic and acidic residues over residues Lys-66 to Glu-75 and Ala-91 to Thr-102. The disordered stretch occupies residues Lys-66–Thr-102. Ser-95 bears the Phosphoserine mark.

It belongs to the DDA1 family. As to quaternary structure, component of numerous DCX (DDB1-CUL4-X-box) E3 ubiquitin-protein ligase complexes which consist of a core of DDB1, cullin-4 (CUL4A or CUL4B), DDA1 and RBX1. Component of the DCX(DCAF15) complex, also named CLR4(DCAF15) complex, composed of DCAF15, DDB1, cullin-4 (CUL4A or CUL4B), DDA1 and RBX1. Part of the DDD core complex containing DET1, DDA1 and DDB1; the DDD core complex recruits a specific UBE2E enzyme, such as UBE2E1, UBE2E2 UBE2E3, to form specific DDD-E2 complexes.

Its pathway is protein modification; protein ubiquitination. Functionally, functions as a component of numerous distinct DCX (DDB1-CUL4-X-box) E3 ubiquitin-protein ligase complexes which mediate the ubiquitination and subsequent proteasomal degradation of target proteins. In the DCX complexes, acts as a scaffolding subunit required to stabilize the complex. The polypeptide is DET1- and DDB1-associated protein 1 (Bos taurus (Bovine)).